The following is a 293-amino-acid chain: Nitrogenase iron protein (293 aa).

10–17 contributes to the ATP binding site; it reads GKGGIGKS. Cys-98 provides a ligand contact to [4Fe-4S] cluster. An ADP-ribosylarginine; by dinitrogenase reductase ADP-ribosyltransferase modification is found at Arg-101. Residue Cys-133 coordinates [4Fe-4S] cluster.

Belongs to the NifH/BchL/ChlL family. In terms of assembly, homodimer. Requires [4Fe-4S] cluster as cofactor. Post-translationally, the reversible ADP-ribosylation of Arg-101 inactivates the nitrogenase reductase and regulates nitrogenase activity.

The catalysed reaction is N2 + 8 reduced [2Fe-2S]-[ferredoxin] + 16 ATP + 16 H2O = H2 + 8 oxidized [2Fe-2S]-[ferredoxin] + 2 NH4(+) + 16 ADP + 16 phosphate + 6 H(+). Functionally, the key enzymatic reactions in nitrogen fixation are catalyzed by the nitrogenase complex, which has 2 components: the iron protein and the molybdenum-iron protein. The sequence is that of Nitrogenase iron protein from Stutzerimonas stutzeri (strain A1501) (Pseudomonas stutzeri).